A 282-amino-acid polypeptide reads, in one-letter code: HTH-type transcriptional activator RhaR (282 aa).

The HTH araC/xylS-type domain maps to 179–277 (DKLITALANS…GMTPSQWRHL (99 aa)). 2 DNA-binding regions (H-T-H motif) span residues 196 to 217 (DAFC…RAQT) and 244 to 267 (ISEI…TRET).

Binds DNA as a dimer.

It localises to the cytoplasm. Functionally, activates expression of the rhaSR operon in response to L-rhamnose. In Salmonella typhimurium (strain LT2 / SGSC1412 / ATCC 700720), this protein is HTH-type transcriptional activator RhaR.